The primary structure comprises 286 residues: Probable xyloglucan endotransglucosylase/hydrolase protein 23 (286 aa).

The first 24 residues, 1 to 24 (MAMISYSTIVVALLASFMICSVSA), serve as a signal peptide directing secretion. The 190-residue stretch at 25–214 (NFQRDVEITW…WSKAPFTASY (190 aa)) folds into the GH16 domain. E100 serves as the catalytic Nucleophile. The active-site Proton donor is the E104. E104 serves as a coordination point for xyloglucan. The N-linked (GlcNAc...) asparagine glycan is linked to N108. Residues 117–119 (HTN), 127–129 (DRE), 193–194 (EW), and G198 contribute to the xyloglucan site. The cysteines at positions 222 and 231 are disulfide-linked. The N-linked (GlcNAc...) asparagine glycan is linked to N233. Residues C269 and C283 are joined by a disulfide bond. R274 provides a ligand contact to xyloglucan.

Belongs to the glycosyl hydrolase 16 family. XTH group 2 subfamily. Contains at least one intrachain disulfide bond essential for its enzymatic activity.

It is found in the secreted. The protein localises to the cell wall. Its subcellular location is the extracellular space. It localises to the apoplast. The catalysed reaction is breaks a beta-(1-&gt;4) bond in the backbone of a xyloglucan and transfers the xyloglucanyl segment on to O-4 of the non-reducing terminal glucose residue of an acceptor, which can be a xyloglucan or an oligosaccharide of xyloglucan.. In terms of biological role, catalyzes xyloglucan endohydrolysis (XEH) and/or endotransglycosylation (XET). Cleaves and religates xyloglucan polymers, an essential constituent of the primary cell wall, and thereby participates in cell wall construction of growing tissues. The sequence is that of Probable xyloglucan endotransglucosylase/hydrolase protein 23 (XTH23) from Arabidopsis thaliana (Mouse-ear cress).